A 171-amino-acid chain; its full sequence is MTRQSAYSRDQLLASARGELFAPDSGRLPNDPMLMFDRITEISDTGGAHGKGVIRAELDIRPDLWFFGCHFIGDPVMPGCLGLDAMWQLTGFFLTWIGAQGRGRALGCGEVKFTGQVLPSAQLVRYEIDVSRVINRKLVMAQTDARMLVDGREIYVAKDLRVGMFTSTENF.

His70 is a catalytic residue.

It belongs to the thioester dehydratase family. FabA subfamily. As to quaternary structure, homodimer.

The protein localises to the cytoplasm. It carries out the reaction a (3R)-hydroxyacyl-[ACP] = a (2E)-enoyl-[ACP] + H2O. The catalysed reaction is (3R)-hydroxydecanoyl-[ACP] = (2E)-decenoyl-[ACP] + H2O. The enzyme catalyses (2E)-decenoyl-[ACP] = (3Z)-decenoyl-[ACP]. The protein operates within lipid metabolism; fatty acid biosynthesis. Its function is as follows. Necessary for the introduction of cis unsaturation into fatty acids. Catalyzes the dehydration of (3R)-3-hydroxydecanoyl-ACP to E-(2)-decenoyl-ACP and then its isomerization to Z-(3)-decenoyl-ACP. Can catalyze the dehydratase reaction for beta-hydroxyacyl-ACPs with saturated chain lengths up to 16:0, being most active on intermediate chain length. This chain is 3-hydroxydecanoyl-[acyl-carrier-protein] dehydratase, found in Xanthomonas oryzae pv. oryzae (strain MAFF 311018).